We begin with the raw amino-acid sequence, 283 residues long: Phosphatidylglycerol--prolipoprotein diacylglyceryl transferase (283 aa).

Helical transmembrane passes span 20–40 (IGGF…IIGL), 60–80 (LVIW…VAFE), 94–114 (IWQG…AILV), and 121–141 (LSFW…QAIG). Arginine 142 is a binding site for a 1,2-diacyl-sn-glycero-3-phospho-(1'-sn-glycerol). Transmembrane regions (helical) follow at residues 183–203 (FLYE…LFFY), 214–234 (GTIT…IEGL), and 248–268 (QVVS…LYLL).

It belongs to the Lgt family.

Its subcellular location is the cell inner membrane. The enzyme catalyses L-cysteinyl-[prolipoprotein] + a 1,2-diacyl-sn-glycero-3-phospho-(1'-sn-glycerol) = an S-1,2-diacyl-sn-glyceryl-L-cysteinyl-[prolipoprotein] + sn-glycerol 1-phosphate + H(+). It functions in the pathway protein modification; lipoprotein biosynthesis (diacylglyceryl transfer). In terms of biological role, catalyzes the transfer of the diacylglyceryl group from phosphatidylglycerol to the sulfhydryl group of the N-terminal cysteine of a prolipoprotein, the first step in the formation of mature lipoproteins. The chain is Phosphatidylglycerol--prolipoprotein diacylglyceryl transferase from Synechocystis sp. (strain ATCC 27184 / PCC 6803 / Kazusa).